A 231-amino-acid polypeptide reads, in one-letter code: NADH-ubiquinone oxidoreductase chain 4 (231 aa).

A run of 6 helical transmembrane segments spans residues 1–21 (PIAG…YGII), 34–54 (MFIP…LTCL), 63–85 (IAYS…TPWG), 89–111 (AMAL…NTTY), 128–148 (ILPM…AMPP), and 169–189 (TIIM…HMFL).

This sequence belongs to the complex I subunit 4 family.

Its subcellular location is the mitochondrion membrane. It catalyses the reaction a ubiquinone + NADH + 5 H(+)(in) = a ubiquinol + NAD(+) + 4 H(+)(out). Core subunit of the mitochondrial membrane respiratory chain NADH dehydrogenase (Complex I) that is believed to belong to the minimal assembly required for catalysis. Complex I functions in the transfer of electrons from NADH to the respiratory chain. The immediate electron acceptor for the enzyme is believed to be ubiquinone. This Lachesis muta muta (Bushmaster) protein is NADH-ubiquinone oxidoreductase chain 4 (MT-ND4).